Reading from the N-terminus, the 141-residue chain is MEMLQGLLLLLLLSMGGAWASREPLRPRCRPINATLAVEKEGCPVCITVNTTICAGYCPTMMRVLQGVLPPLPQVVCTYRDVRFESIXLPGCPRGVDPMVSFPVALSCRCGPCHRSTSDCGGPNDHPLTCDHPQLSGLLFL.

Positions Met1–Ala20 are cleaved as a signal peptide. Intrachain disulfides connect Cys29/Cys77, Cys43/Cys92, Cys46/Cys130, Cys54/Cys108, Cys58/Cys110, and Cys113/Cys120. N-linked (GlcNAc...) asparagine glycans are attached at residues Asn33 and Asn50.

The protein belongs to the glycoprotein hormones subunit beta family. Heterodimer of a common alpha chain and a unique beta chain which confers biological specificity to thyrotropin, lutropin, follitropin and gonadotropin.

The protein localises to the secreted. In terms of biological role, promotes spermatogenesis and ovulation by stimulating the testes and ovaries to synthesize steroids. This Gorilla gorilla gorilla (Western lowland gorilla) protein is Lutropin subunit beta (LHB).